A 90-amino-acid polypeptide reads, in one-letter code: MKNIKPLADRVLIKIKEAESKTISGLYIPENAKEKTNIGTVIAIGSNKEEITVKVGDTVLYEKYAGAAVKIENKEHLILKAKEIVAIIEE.

The protein belongs to the GroES chaperonin family. In terms of assembly, heptamer of 7 subunits arranged in a ring. Interacts with the chaperonin GroEL.

Its subcellular location is the cytoplasm. Together with the chaperonin GroEL, plays an essential role in assisting protein folding. The GroEL-GroES system forms a nano-cage that allows encapsulation of the non-native substrate proteins and provides a physical environment optimized to promote and accelerate protein folding. GroES binds to the apical surface of the GroEL ring, thereby capping the opening of the GroEL channel. In Borreliella afzelii (strain PKo) (Borrelia afzelii), this protein is Co-chaperonin GroES.